Consider the following 153-residue polypeptide: MNVGVAHSEVNPNTRVMNSRGMWLTYALGVGLLHIVLLSIPFFSVPVAWTLTNIIHNLGMYVFLHAVKGTPFETPDQGKARLLTHWEQLDYGVQFTSSRKFFTISPIILYFLASFYTKYDPTHFILNTASLLSVLIPKMPQLHGVRIFGINKY.

Over Met-1 to Tyr-26 the chain is Cytoplasmic. Transmembrane regions (helical) follow at residues Ala-27–Pro-46 and Val-47–Leu-64. At His-65 to Lys-100 the chain is on the cytoplasmic side. A helical membrane pass occupies residues Phe-101–Pro-121. Over Thr-122–His-123 the chain is Extracellular. The chain crosses the membrane as a helical span at residues Phe-124–Pro-140. Residues Gln-141–Tyr-153 lie on the Cytoplasmic side of the membrane.

Belongs to the ORM family. As to quaternary structure, ceramide-sensitive subunit of the serine palmitoyltransferase (SPT) complex, which is also composed of SPTLC1, SPTLC2/3 and SPTSSA/B. As to expression, widely expressed. Expressed in adult and fetal heart, brain, lung, liver, skeletal muscle and kidney. Expressed in adult pancreas and placenta and in fetal spleen abd thymus. Expressed at intermediate level in pancreas, placenta and brain but low in skeletal muscle and lung.

Its subcellular location is the endoplasmic reticulum membrane. Functionally, plays an essential role in the homeostatic regulation of sphingolipid de novo biosynthesis by modulating the activity of the serine palmitoyltransferase (SPT) in response to ceramide levels. When complexed to SPT, the binding of ceramides to its N-terminus stabilizes a conformation that block SPT substrate entry, hence preventing SPT catalytic activity. Through this mechanism, maintains ceramide levels at sufficient concentrations for the production of complex sphingolipids, but which prevents the accumulation of ceramides to levels that trigger apoptosis. This is ORM1-like protein 1 (ORMDL1) from Homo sapiens (Human).